Reading from the N-terminus, the 282-residue chain is uncharacterized protein (282 aa).

The region spanning 1–77 (MNGLLRIRQR…LALSEALASQ (77 aa)) is the HTH rpiR-type domain. A DNA-binding region (H-T-H motif) is located at residues 37–56 (SQQLANEAGVSQSSVVKFAQ). Positions 125–265 (CVTMLRSARR…FIALIQQDLE (141 aa)) constitute an SIS domain.

This is an uncharacterized protein from Escherichia coli (strain K12).